Reading from the N-terminus, the 392-residue chain is Phosphoglycerate kinase (392 aa).

Substrate contacts are provided by residues 21-23 (DLN), Arg36, 59-62 (HLGR), Arg113, and Arg146. ATP-binding positions include Lys197, Glu319, and 345-348 (GGDT).

Belongs to the phosphoglycerate kinase family. Monomer.

It is found in the cytoplasm. It catalyses the reaction (2R)-3-phosphoglycerate + ATP = (2R)-3-phospho-glyceroyl phosphate + ADP. It participates in carbohydrate degradation; glycolysis; pyruvate from D-glyceraldehyde 3-phosphate: step 2/5. This chain is Phosphoglycerate kinase, found in Alkalilimnicola ehrlichii (strain ATCC BAA-1101 / DSM 17681 / MLHE-1).